The chain runs to 633 residues: Pescadillo homolog (633 aa).

Positions 321-414 constitute a BRCT domain; the sequence is RLRTLFKGLK…QLLPTNKYFL (94 aa). 2 disordered regions span residues 450 to 470 and 490 to 567; these read HAQSEDESEDDAAAEEEDTVE and KKYG…LQAR. Residues Ser-453 and Ser-457 each carry the phosphoserine modification. Composition is skewed to acidic residues over residues 454–470 and 498–526; these read EDESEDDAAAEEEDTVE and VNEDEEDSDEEDFDGEEQESDDDDEEELD. Positions 527 to 538 are enriched in basic and acidic residues; sequence EKEKRLLEEKQK. Basic residues predominate over residues 545–554; the sequence is KVHKVNKRQV. The segment covering 555 to 564 has biased composition (basic and acidic residues); it reads HKAEVDEHRL. The stretch at 593-626 forms a coiled coil; the sequence is LLRKKRRTIETDAKEAKKLAKREARKAAAAAAAA.

Belongs to the pescadillo family.

It is found in the nucleus. Its subcellular location is the nucleolus. The protein resides in the nucleoplasm. Functionally, required for maturation of ribosomal RNAs and formation of the large ribosomal subunit. This chain is Pescadillo homolog, found in Drosophila virilis (Fruit fly).